Consider the following 188-residue polypeptide: Phosphatidylinositol N-acetylglucosaminyltransferase subunit H (188 aa).

The protein belongs to the PIGH family. In terms of assembly, component of the glycosylphosphatidylinositol-N-acetylglucosaminyltransferase (GPI-GnT) complex composed at least by PIGA, PIGC, PIGH, PIGP, PIGQ, PIGY and DPM2. Interacts with PIGQ.

It localises to the cytoplasm. The protein operates within glycolipid biosynthesis; glycosylphosphatidylinositol-anchor biosynthesis. Functionally, part of the glycosylphosphatidylinositol-N-acetylglucosaminyltransferase (GPI-GnT) complex that catalyzes the transfer of N-acetylglucosamine from UDP-N-acetylglucosamine to phosphatidylinositol and participates in the first step of GPI biosynthesis. The chain is Phosphatidylinositol N-acetylglucosaminyltransferase subunit H from Mus musculus (Mouse).